Here is a 981-residue protein sequence, read N- to C-terminus: Bifunctional glutamine synthetase adenylyltransferase/adenylyl-removing enzyme (981 aa).

Residues 1–473 (MTMPLPSIEQ…RSVFNNLIGF (473 aa)) form an adenylyl removase region. Residues 479-981 (ADDSDNAWSD…HQIWQKLFFE (503 aa)) are adenylyl transferase.

Belongs to the GlnE family. It depends on Mg(2+) as a cofactor.

It carries out the reaction [glutamine synthetase]-O(4)-(5'-adenylyl)-L-tyrosine + phosphate = [glutamine synthetase]-L-tyrosine + ADP. It catalyses the reaction [glutamine synthetase]-L-tyrosine + ATP = [glutamine synthetase]-O(4)-(5'-adenylyl)-L-tyrosine + diphosphate. Involved in the regulation of glutamine synthetase GlnA, a key enzyme in the process to assimilate ammonia. When cellular nitrogen levels are high, the C-terminal adenylyl transferase (AT) inactivates GlnA by covalent transfer of an adenylyl group from ATP to specific tyrosine residue of GlnA, thus reducing its activity. Conversely, when nitrogen levels are low, the N-terminal adenylyl removase (AR) activates GlnA by removing the adenylyl group by phosphorolysis, increasing its activity. The regulatory region of GlnE binds the signal transduction protein PII (GlnB) which indicates the nitrogen status of the cell. The sequence is that of Bifunctional glutamine synthetase adenylyltransferase/adenylyl-removing enzyme from Mannheimia succiniciproducens (strain KCTC 0769BP / MBEL55E).